We begin with the raw amino-acid sequence, 333 residues long: S-adenosylmethionine decarboxylase proenzyme (333 aa).

Residue Phe-7 coordinates substrate. Catalysis depends on residues Glu-8 and Glu-11. Glu-67 is a binding site for substrate. The active-site Schiff-base intermediate with substrate; via pyruvic acid is the Ser-68. Ser-68 is subject to Pyruvic acid (Ser); by autocatalysis. Residue Cys-82 is the Proton donor; for catalytic activity of the active site. Phe-223 provides a ligand contact to substrate. Residues Ser-229 and His-243 each act as proton acceptor; for processing activity in the active site. Residue Glu-247 participates in substrate binding. At Ser-298 the chain carries Phosphoserine.

The protein belongs to the eukaryotic AdoMetDC family. In terms of assembly, heterotetramer of two alpha and two beta chains. The cofactor is pyruvate. Is synthesized initially as an inactive proenzyme. Formation of the active enzyme involves a self-maturation process in which the active site pyruvoyl group is generated from an internal serine residue via an autocatalytic post-translational modification. Two non-identical subunits are generated from the proenzyme in this reaction, and the pyruvate is formed at the N-terminus of the alpha chain, which is derived from the carboxyl end of the proenzyme. The post-translation cleavage follows an unusual pathway, termed non-hydrolytic serinolysis, in which the side chain hydroxyl group of the serine supplies its oxygen atom to form the C-terminus of the beta chain, while the remainder of the serine residue undergoes an oxidative deamination to produce ammonia and the pyruvoyl group blocking the N-terminus of the alpha chain.

It carries out the reaction S-adenosyl-L-methionine + H(+) = S-adenosyl 3-(methylsulfanyl)propylamine + CO2. Its pathway is amine and polyamine biosynthesis; S-adenosylmethioninamine biosynthesis; S-adenosylmethioninamine from S-adenosyl-L-methionine: step 1/1. Essential for biosynthesis of the polyamines spermidine and spermine. Promotes maintenance and self-renewal of embryonic stem cells, by maintaining spermine levels. This is S-adenosylmethionine decarboxylase proenzyme (Amd1) from Rattus norvegicus (Rat).